Here is a 637-residue protein sequence, read N- to C-terminus: Transmembrane 9 superfamily member 10 (637 aa).

The signal sequence occupies residues 1-23 (MAKVRILIFTLVLFFSLNVHIHG). Over 24 to 274 (FYLPGVAPQD…YLLMADDQIH (251 aa)) the chain is Lumenal. The helical transmembrane segment at 275-295 (WFSIVNSMMIVLFLSGMVAMI) threads the bilayer. Over 296-344 (MLRTLYRDISNYNQLESHEEALEETGWKLVHGDVFRPPTNPELLCVYAG) the chain is Cytoplasmic. Residues 345 to 365 (TGVQCFGMILVTMIFACLGFL) traverse the membrane as a helical segment. Topologically, residues 366–370 (SPSNR) are lumenal. The helical transmembrane segment at 371–391 (GGLMTAMLLLWVFMGLLAGYA) threads the bilayer. The Cytoplasmic segment spans residues 392–411 (SSRLYKTLRGTEWKRNALKT). A helical transmembrane segment spans residues 412-432 (AFMFPATVFVAFFVLNAIIWG). Residues 433-444 (QKSSGAVPFGTM) are Lumenal-facing. The helical transmembrane segment at 445–465 (FALVVLWFGISVPLVFIGGYI) threads the bilayer. The Cytoplasmic portion of the chain corresponds to 466–494 (GFRKPAPEDPVKTNKIPRQIPTQAWYMNP). The chain crosses the membrane as a helical span at residues 495–515 (IFSILIGGILPFGAVFIELFF). Over 516 to 527 (ILTSIWLHQFYY) the chain is Lumenal. The chain crosses the membrane as a helical span at residues 528–548 (IFGFLFIVFIILIITCAEITV). The Cytoplasmic portion of the chain corresponds to 549–566 (VLCYFQLCSEDYQWWWRS). Residues 567-587 (YLTSGSSAVYLFLYAVFYFYT) form a helical membrane-spanning segment. Residues 588-593 (KLEITK) lie on the Lumenal side of the membrane. A helical membrane pass occupies residues 594 to 614 (LVSAVLYFGYMLIVSYVFFVF). Topologically, residues 615–637 (TGAIGFYACFWFTRLIYSSVKID) are cytoplasmic. The short motif at 626 to 631 (FTRLIY) is the Endoplasmic reticulum export signal element. The Golgi retention signal motif lies at 635 to 637 (KID).

This sequence belongs to the nonaspanin (TM9SF) (TC 9.A.2) family.

The protein resides in the endosome membrane. Its subcellular location is the golgi apparatus membrane. The polypeptide is Transmembrane 9 superfamily member 10 (Arabidopsis thaliana (Mouse-ear cress)).